A 118-amino-acid chain; its full sequence is Large ribosomal subunit protein eL22 (118 aa).

Belongs to the eukaryotic ribosomal protein eL22 family.

The chain is Large ribosomal subunit protein eL22 (RPL22) from Tetrahymena thermophila (strain SB210).